The sequence spans 342 residues: Methylthioribose-1-phosphate isomerase (342 aa).

Residues 49–51 (RGA), Arg86, and Gln187 contribute to the substrate site. The Proton donor role is filled by Asp228. 238 to 239 (NK) contacts substrate.

The protein belongs to the eIF-2B alpha/beta/delta subunits family. MtnA subfamily.

It carries out the reaction 5-(methylsulfanyl)-alpha-D-ribose 1-phosphate = 5-(methylsulfanyl)-D-ribulose 1-phosphate. It participates in amino-acid biosynthesis; L-methionine biosynthesis via salvage pathway; L-methionine from S-methyl-5-thio-alpha-D-ribose 1-phosphate: step 1/6. Functionally, catalyzes the interconversion of methylthioribose-1-phosphate (MTR-1-P) into methylthioribulose-1-phosphate (MTRu-1-P). In Serratia proteamaculans (strain 568), this protein is Methylthioribose-1-phosphate isomerase.